The following is a 180-amino-acid chain: Threonylcarbamoyl-AMP synthase (180 aa).

Positions 1-180 constitute a YrdC-like domain; that stretch reads MRARALQHFL…DLITGAIVRP (180 aa).

The protein belongs to the SUA5 family. TsaC subfamily.

It localises to the cytoplasm. The catalysed reaction is L-threonine + hydrogencarbonate + ATP = L-threonylcarbamoyladenylate + diphosphate + H2O. Required for the formation of a threonylcarbamoyl group on adenosine at position 37 (t(6)A37) in tRNAs that read codons beginning with adenine. Catalyzes the conversion of L-threonine, HCO(3)(-)/CO(2) and ATP to give threonylcarbamoyl-AMP (TC-AMP) as the acyladenylate intermediate, with the release of diphosphate. This Methylobacillus flagellatus (strain ATCC 51484 / DSM 6875 / VKM B-1610 / KT) protein is Threonylcarbamoyl-AMP synthase.